We begin with the raw amino-acid sequence, 125 residues long: Fluoride-specific ion channel FluC (125 aa).

4 helical membrane-spanning segments follow: residues 2–22 (WLSI…RTGF), 35–55 (LGTL…LAFF), 68–88 (LIIT…AEVV), and 98–118 (WALG…LLGI). 2 residues coordinate Na(+): Gly75 and Thr78.

It belongs to the fluoride channel Fluc/FEX (TC 1.A.43) family.

The protein resides in the cell inner membrane. The catalysed reaction is fluoride(in) = fluoride(out). With respect to regulation, na(+) is not transported, but it plays an essential structural role and its presence is essential for fluoride channel function. Functionally, fluoride-specific ion channel. Important for reducing fluoride concentration in the cell, thus reducing its toxicity. The protein is Fluoride-specific ion channel FluC of Polynucleobacter asymbioticus (strain DSM 18221 / CIP 109841 / QLW-P1DMWA-1) (Polynucleobacter necessarius subsp. asymbioticus).